Consider the following 338-residue polypeptide: Holliday junction branch migration complex subunit RuvB (338 aa).

Residues 4 to 187 are large ATPase domain (RuvB-L); sequence ADRLIHAEPQ…FGIPLRLEFY (184 aa). ATP-binding positions include Arg-27, Gly-68, Lys-71, Thr-72, Thr-73, 134–136, Arg-177, Tyr-187, and Arg-224; that span reads EDY. A Mg(2+)-binding site is contributed by Thr-72. Positions 188–258 are small ATPAse domain (RuvB-S); sequence NVKDLSSIVT…VAELALDMLD (71 aa). The head domain (RuvB-H) stretch occupies residues 261–338; it reads SEGFDYMDRK…RHFDIIQPEK (78 aa). The DNA site is built by Arg-297, Arg-316, and Arg-321.

It belongs to the RuvB family. As to quaternary structure, homohexamer. Forms an RuvA(8)-RuvB(12)-Holliday junction (HJ) complex. HJ DNA is sandwiched between 2 RuvA tetramers; dsDNA enters through RuvA and exits via RuvB. An RuvB hexamer assembles on each DNA strand where it exits the tetramer. Each RuvB hexamer is contacted by two RuvA subunits (via domain III) on 2 adjacent RuvB subunits; this complex drives branch migration. In the full resolvosome a probable DNA-RuvA(4)-RuvB(12)-RuvC(2) complex forms which resolves the HJ.

It localises to the cytoplasm. It catalyses the reaction ATP + H2O = ADP + phosphate + H(+). In terms of biological role, the RuvA-RuvB-RuvC complex processes Holliday junction (HJ) DNA during genetic recombination and DNA repair, while the RuvA-RuvB complex plays an important role in the rescue of blocked DNA replication forks via replication fork reversal (RFR). RuvA specifically binds to HJ cruciform DNA, conferring on it an open structure. The RuvB hexamer acts as an ATP-dependent pump, pulling dsDNA into and through the RuvAB complex. RuvB forms 2 homohexamers on either side of HJ DNA bound by 1 or 2 RuvA tetramers; 4 subunits per hexamer contact DNA at a time. Coordinated motions by a converter formed by DNA-disengaged RuvB subunits stimulates ATP hydrolysis and nucleotide exchange. Immobilization of the converter enables RuvB to convert the ATP-contained energy into a lever motion, pulling 2 nucleotides of DNA out of the RuvA tetramer per ATP hydrolyzed, thus driving DNA branch migration. The RuvB motors rotate together with the DNA substrate, which together with the progressing nucleotide cycle form the mechanistic basis for DNA recombination by continuous HJ branch migration. Branch migration allows RuvC to scan DNA until it finds its consensus sequence, where it cleaves and resolves cruciform DNA. This is Holliday junction branch migration complex subunit RuvB from Shewanella woodyi (strain ATCC 51908 / MS32).